Reading from the N-terminus, the 269-residue chain is Putative 6-phosphogluconolactonase (269 aa).

A disordered region spans residues 248-269 (DAATGVPDRDSSDSDSPPPFDG).

Belongs to the glucosamine/galactosamine-6-phosphate isomerase family. 6-phosphogluconolactonase subfamily.

The protein resides in the nucleus. The catalysed reaction is 6-phospho-D-glucono-1,5-lactone + H2O = 6-phospho-D-gluconate + H(+). It participates in carbohydrate degradation; pentose phosphate pathway; D-ribulose 5-phosphate from D-glucose 6-phosphate (oxidative stage): step 2/3. Functionally, hydrolysis of 6-phosphogluconolactone to 6-phosphogluconate. This Caenorhabditis elegans protein is Putative 6-phosphogluconolactonase.